A 399-amino-acid chain; its full sequence is Guanine nucleotide-binding protein G(f) subunit alpha (399 aa).

The G-alpha domain maps to 46-399; the sequence is TTVKILLLGT…SENVSSMGLF (354 aa). The tract at residues 49 to 62 is G1 motif; the sequence is KILLLGTAESGKTT. GTP is bound by residues 54–61, 188–194, 221–225, 290–293, and Ala371; these read GTAESGKT, LHSRKIT, DVGGQ, and NKYD. The tract at residues 186 to 194 is G2 motif; it reads DILHSRKIT. Thr194 is a Mg(2+) binding site. The G3 motif stretch occupies residues 217 to 226; it reads FQMYDVGGQR. Residues 286-293 are G4 motif; that stretch reads IVFLNKYD. Positions 369 to 374 are G5 motif; it reads TVATDT.

The protein belongs to the G-alpha family. As to quaternary structure, g proteins are composed of 3 units; alpha, beta and gamma. The alpha chain contains the guanine nucleotide binding site. In terms of tissue distribution, during embryogenesis, expressed primarily in the developing gut and transiently in the amnioserosa.

Guanine nucleotide-binding proteins (G proteins) are involved as modulators or transducers in various transmembrane signaling systems. The protein is Guanine nucleotide-binding protein G(f) subunit alpha (Galphaf) of Drosophila melanogaster (Fruit fly).